The primary structure comprises 407 residues: Tryptophan synthase beta chain (407 aa).

Lysine 91 is subject to N6-(pyridoxal phosphate)lysine.

Belongs to the TrpB family. Tetramer of two alpha and two beta chains. Pyridoxal 5'-phosphate is required as a cofactor.

It carries out the reaction (1S,2R)-1-C-(indol-3-yl)glycerol 3-phosphate + L-serine = D-glyceraldehyde 3-phosphate + L-tryptophan + H2O. It participates in amino-acid biosynthesis; L-tryptophan biosynthesis; L-tryptophan from chorismate: step 5/5. Its function is as follows. The beta subunit is responsible for the synthesis of L-tryptophan from indole and L-serine. This chain is Tryptophan synthase beta chain, found in Streptococcus pneumoniae (strain 70585).